A 795-amino-acid chain; its full sequence is Toll-like receptor 6 (795 aa).

The signal sequence occupies residues 1–27; the sequence is MSQDRKPIVGSFHFVCALALIVGSMTP. Residues 28-584 are Extracellular-facing; sequence FSNELESMVD…FHMSPLSCDT (557 aa). Asn-42 is a glycosylation site (N-linked (GlcNAc...) asparagine). 19 LRR repeats span residues 54–77, 78–101, 102–125, 126–150, 151–175, 176–199, 200–223, 224–250, 251–278, 279–308, 309–337, 338–361, 362–388, 389–414, 415–437, 438–457, 458–478, 479–500, and 501–524; these read TKAL…FLSE, LRVL…FNQD, LEYL…SLRH, LDLS…KLTF, LGLS…SCIL, LDLV…TTVL, HLVF…LGHL, QLSN…RGPT, LLNV…PRPV, EYLN…KSLM, IEHV…KMLS, ISDT…LNFT, QNVF…QRNG, LKNF…SLNS, LNSH…NLSS, NMLT…VLDL, HNNR…LQEL, NVAS…LSVL, and VIDH…IRSL. A glycan (N-linked (GlcNAc...) asparagine) is linked at Asn-114. Cysteines 117 and 139 form a disulfide. N-linked (GlcNAc...) asparagine glycosylation is present at Asn-144. Asn-195 and Asn-214 each carry an N-linked (GlcNAc...) asparagine glycan. Cys-235 and Cys-265 are oxidised to a cystine. N-linked (GlcNAc...) asparagine glycans are attached at residues Asn-253 and Asn-285. The cysteines at positions 348 and 373 are disulfide-linked. A glycan (N-linked (GlcNAc...) asparagine) is linked at Asn-359. 2 N-linked (GlcNAc...) asparagine glycosylation sites follow: Asn-401 and Asn-434. A disulfide bridge links Cys-424 with Cys-447. One can recognise an LRRCT domain in the interval 525–576; the sequence is TAGNNPFQCTCELRDFVKNIGWVAREVVEGWPDSYRCDYPESSKGTALRDFH. A helical membrane pass occupies residues 585–605; the sequence is VLLTVTIGATMLVLAVTGAFL. Topologically, residues 606-795 are cytoplasmic; that stretch reads CLYFDLPWYV…ALVNEDDVKT (190 aa). In terms of domain architecture, TIR spans 640 to 781; that stretch reads LQFHAFVSYS…LFWANLRASF (142 aa).

It belongs to the Toll-like receptor family. Homodimer (via cytoplasmic TIR domain). Heterodimer with TLR2 via their respective extracellular domains. Binds MYD88 via their respective TIR domains. Interacts with CD36, following CD36 stimulation by oxLDL or amyloid-beta 42, and forms a heterodimer with TLR4. The trimeric complex is internalized and triggers inflammatory response. LYN kinase activity facilitates TLR4:TLR6 heterodimerization and signal initiation. The heterodimer TLR2:TLR6 interacts with CD14 and CD36 in response to triacylated lipopeptides. In terms of tissue distribution, detected in thymus, spleen, ovary and lung. Expressed in macrohpages.

Its subcellular location is the cell membrane. The protein localises to the cytoplasmic vesicle. The protein resides in the phagosome membrane. It localises to the membrane raft. It is found in the golgi apparatus. Participates in the innate immune response to Gram-positive bacteria and fungi. Specifically recognizes diacylated and, to a lesser extent, triacylated lipopeptides. In response to diacylated lipopeptides, forms the activation cluster TLR2:TLR6:CD14:CD36, this cluster triggers signaling from the cell surface and subsequently is targeted to the Golgi in a lipid-raft dependent pathway. Acts via MYD88 and TRAF6, leading to NF-kappa-B activation, cytokine secretion and the inflammatory response. Recognizes mycoplasmal macrophage-activating lipopeptide-2kD (MALP-2), soluble tuberculosis factor (STF), phenol-soluble modulin (PSM) and B.burgdorferi outer surface protein A lipoprotein (OspA-L) cooperatively with TLR2. In complex with TLR4, promotes sterile inflammation in monocytes/macrophages in response to oxidized low-density lipoprotein (oxLDL) or amyloid-beta 42. In this context, the initial signal is provided by oxLDL- or amyloid-beta 42-binding to CD36. This event induces the formation of a heterodimer of TLR4 and TLR6, which is rapidly internalized and triggers inflammatory response, leading to the NF-kappa-B-dependent production of CXCL1, CXCL2 and CCL9 cytokines, via MYD88 signaling pathway, and CCL5 cytokine, via TICAM1 signaling pathway, as well as IL1B secretion. The polypeptide is Toll-like receptor 6 (Tlr6) (Mus musculus (Mouse)).